We begin with the raw amino-acid sequence, 407 residues long: Arginine deiminase (407 aa).

Residue Cys397 is the Amidino-cysteine intermediate of the active site.

The protein belongs to the arginine deiminase family.

It is found in the cytoplasm. The catalysed reaction is L-arginine + H2O = L-citrulline + NH4(+). Its pathway is amino-acid degradation; L-arginine degradation via ADI pathway; carbamoyl phosphate from L-arginine: step 1/2. In Vibrio parahaemolyticus serotype O3:K6 (strain RIMD 2210633), this protein is Arginine deiminase.